The primary structure comprises 1257 residues: Bifunctional autolysin (1257 aa).

A signal peptide spans 1-29 (MAKKFNYKLPSMVALTLVGSAVTAHQVQA). Over residues 99-137 (QVNGDTRATQSTTSNNAKPVTKSTNTTAPKTNNNVTSAG) the composition is skewed to polar residues. Disordered regions lie at residues 99–150 (QVNG…NSEN), 173–217 (AAPK…KYKP), and 417–441 (TQST…PSTG). Low complexity-rich tracts occupy residues 173–208 (AAPK…AAAP) and 419–440 (STTT…TPST). Residues 197 to 776 (ASAQPRSAAA…AVAQPKTAVK (580 aa)) form an N-acetylmuramoyl-L-alanine amidase region. GW domains follow at residues 444-518 (TVAA…YNTA), 520-594 (SPVN…DTAK), 613-687 (TVSS…YNNA), 689-763 (SPVN…VPAA), 785-860 (TTQT…VQNL), 862-937 (KEVK…APTA), and 944-1018 (AAKD…KELI). The interval 777–1257 (AYAVTKPQTT…GKYFDIPQYK (481 aa)) is endo-beta-N-acetylglucosaminidase.

This sequence in the N-terminal section; belongs to the N-acetylmuramoyl-L-alanine amidase 2 family. In the C-terminal section; belongs to the glycosyl hydrolase 73 family. As to quaternary structure, oligomer; forms a ring structure at the cell surface which is important for efficient partitioning of daughter cells after cell division. In terms of processing, undergoes proteolytic processing to generate the two extracellular lytic enzymes, probably at the septal region on the cell surface.

The protein localises to the secreted. It catalyses the reaction Hydrolyzes the link between N-acetylmuramoyl residues and L-amino acid residues in certain cell-wall glycopeptides.. The enzyme catalyses an N(4)-(oligosaccharide-(1-&gt;3)-[oligosaccharide-(1-&gt;6)]-beta-D-Man-(1-&gt;4)-beta-D-GlcNAc-(1-&gt;4)-alpha-D-GlcNAc)-L-asparaginyl-[protein] + H2O = an oligosaccharide-(1-&gt;3)-[oligosaccharide-(1-&gt;6)]-beta-D-Man-(1-&gt;4)-D-GlcNAc + N(4)-(N-acetyl-beta-D-glucosaminyl)-L-asparaginyl-[protein]. Its function is as follows. Endohydrolysis of the di-N-acetylchitobiosyl unit in high-mannose glycopeptides and glycoproteins containing the -[(Man)5(GlcNAc)2]-Asn structure. One N-acetyl-D-glucosamine residue remains attached to the protein; the rest of the oligosaccharide is released intact. Cleaves the peptidoglycan connecting the daughter cells at the end of the cell division cycle, resulting in the separation of the two newly divided cells. Acts as an autolysin in penicillin-induced lysis. The sequence is that of Bifunctional autolysin (atl) from Staphylococcus aureus (strain MRSA252).